A 61-amino-acid polypeptide reads, in one-letter code: Small ribosomal subunit protein uS14B (61 aa).

Cysteine 24, cysteine 27, cysteine 40, and cysteine 43 together coordinate Zn(2+).

This sequence belongs to the universal ribosomal protein uS14 family. Zinc-binding uS14 subfamily. As to quaternary structure, part of the 30S ribosomal subunit. Contacts proteins S3 and S10. Zn(2+) is required as a cofactor.

Its function is as follows. Binds 16S rRNA, required for the assembly of 30S particles and may also be responsible for determining the conformation of the 16S rRNA at the A site. The sequence is that of Small ribosomal subunit protein uS14B from Cutibacterium acnes (strain DSM 16379 / KPA171202) (Propionibacterium acnes).